Consider the following 486-residue polypeptide: Cysteine--tRNA ligase (486 aa).

Zn(2+) is bound at residue Cys30. Residues 32–42 (PTVYDRAHLGN) carry the 'HIGH' region motif. Cys221, His246, and Glu250 together coordinate Zn(2+). Positions 279–283 (KMSKS) match the 'KMSKS' region motif. Position 282 (Lys282) interacts with ATP.

This sequence belongs to the class-I aminoacyl-tRNA synthetase family. In terms of assembly, monomer. The cofactor is Zn(2+).

The protein localises to the cytoplasm. The catalysed reaction is tRNA(Cys) + L-cysteine + ATP = L-cysteinyl-tRNA(Cys) + AMP + diphosphate. In Cereibacter sphaeroides (strain ATCC 17029 / ATH 2.4.9) (Rhodobacter sphaeroides), this protein is Cysteine--tRNA ligase.